The sequence spans 288 residues: MEQYLSLLKEILEKGQKKEDRTNTGTISYFGTQRRYDLSKGFPLVTTKKVHLKSIIFELLWFIKGDTNIKYLVDNGVNIWNEWPYETFKKSKDFNGESLADFVLKIKSDTLFAKKYGELGPVYGKQWRNFNGTDQLFDAIETIKKNPDSRRIIVSAWAANEISKMALPPCHAFFQFYVNNNKLSLQLYQRSGDTFLGVPFNIASYSILLAMVAQITNYEVGEFIHTIGDTHIYLNHLEQVEEQLSRKPLKLPKLVLNKKIKNIDDFKYEDIEIIDYESHPAIKAKVAV.

R21 contributes to the dUMP binding site. H51 lines the (6R)-5,10-methylene-5,6,7,8-tetrahydrofolate pocket. 150–151 serves as a coordination point for dUMP; the sequence is RR. The Nucleophile role is filled by C170. DUMP contacts are provided by residues 190-193, N201, and 231-233; these read RSGD and HIY. Residue D193 coordinates (6R)-5,10-methylene-5,6,7,8-tetrahydrofolate. Residue A287 participates in (6R)-5,10-methylene-5,6,7,8-tetrahydrofolate binding.

The protein belongs to the thymidylate synthase family. Bacterial-type ThyA subfamily. As to quaternary structure, homodimer.

Its subcellular location is the cytoplasm. The enzyme catalyses dUMP + (6R)-5,10-methylene-5,6,7,8-tetrahydrofolate = 7,8-dihydrofolate + dTMP. It participates in pyrimidine metabolism; dTTP biosynthesis. In terms of biological role, catalyzes the reductive methylation of 2'-deoxyuridine-5'-monophosphate (dUMP) to 2'-deoxythymidine-5'-monophosphate (dTMP) while utilizing 5,10-methylenetetrahydrofolate (mTHF) as the methyl donor and reductant in the reaction, yielding dihydrofolate (DHF) as a by-product. This enzymatic reaction provides an intracellular de novo source of dTMP, an essential precursor for DNA biosynthesis. The sequence is that of Thymidylate synthase from Mycoplasma mobile (strain ATCC 43663 / 163K / NCTC 11711) (Mesomycoplasma mobile).